Here is a 543-residue protein sequence, read N- to C-terminus: Chaperonin GroEL (543 aa).

Residues 30–33, Lys-51, 87–91, Gly-415, 480–482, and Asp-496 contribute to the ATP site; these read TLGP, DGTTT, and NAL.

Belongs to the chaperonin (HSP60) family. Forms a cylinder of 14 subunits composed of two heptameric rings stacked back-to-back. Interacts with the co-chaperonin GroES.

It localises to the cytoplasm. It carries out the reaction ATP + H2O + a folded polypeptide = ADP + phosphate + an unfolded polypeptide.. Its function is as follows. Together with its co-chaperonin GroES, plays an essential role in assisting protein folding. The GroEL-GroES system forms a nano-cage that allows encapsulation of the non-native substrate proteins and provides a physical environment optimized to promote and accelerate protein folding. The polypeptide is Chaperonin GroEL (Gemmatimonas aurantiaca (strain DSM 14586 / JCM 11422 / NBRC 100505 / T-27)).